A 568-amino-acid polypeptide reads, in one-letter code: CRISPR-associated exonuclease Cas4/endonuclease Cas1 fusion (568 aa).

Positions 1–209 (MSVVVTRYRG…KCSLAPVCLP (209 aa)) are CRISPR-associated exonuclease Cas4. Cysteine 43 contributes to the [4Fe-4S] cluster binding site. The Mn(2+) site is built by aspartate 95 and glutamate 108. Cysteine 198, cysteine 201, and cysteine 207 together coordinate [4Fe-4S] cluster. The segment at 232–568 (VLHVATPGTR…PGLFATFRLR (337 aa)) is CRISPR-associated endonuclease Cas1. Residues glutamate 390, histidine 459, and glutamate 474 each coordinate Mn(2+).

The protein in the N-terminal section; belongs to the CRISPR-associated exonuclease Cas4 family. It in the C-terminal section; belongs to the CRISPR-associated endonuclease Cas1 family. As to quaternary structure, homodimer, forms a heterotetramer with a Cas2 homodimer. [4Fe-4S] cluster serves as cofactor. It depends on Mg(2+) as a cofactor. Mn(2+) is required as a cofactor.

It carries out the reaction exonucleolytic cleavage in the 5'- to 3'-direction to yield nucleoside 3'-phosphates.. CRISPR (clustered regularly interspaced short palindromic repeat), is an adaptive immune system that provides protection against mobile genetic elements (viruses, transposable elements and conjugative plasmids). CRISPR clusters contain spacers, sequences complementary to antecedent mobile elements, and target invading nucleic acids. CRISPR clusters are transcribed and processed into CRISPR RNA (crRNA). The Cas4 region acts as a ssDNA exonuclease, while the Cas1 region acts as a dsDNA endonuclease. Involved in the integration of spacer DNA into the CRISPR cassette. This is CRISPR-associated exonuclease Cas4/endonuclease Cas1 fusion (cas4-cas1) from Myxococcus xanthus (strain DK1622).